The following is a 444-amino-acid chain: 23S rRNA (uracil(1939)-C(5))-methyltransferase RlmD (444 aa).

The TRAM domain occupies 5 to 64 (KPKLNLTSQTARIVNLSHDGRGIARVNGKATFIQGALPGEVVEFQYTRIKKDFDEGKLLS). Residues cysteine 77, cysteine 83, cysteine 86, and cysteine 166 each coordinate [4Fe-4S] cluster. Positions 276, 305, 310, 326, 353, and 374 each coordinate S-adenosyl-L-methionine. Cysteine 400 (nucleophile) is an active-site residue.

This sequence belongs to the class I-like SAM-binding methyltransferase superfamily. RNA M5U methyltransferase family. RlmD subfamily.

It carries out the reaction uridine(1939) in 23S rRNA + S-adenosyl-L-methionine = 5-methyluridine(1939) in 23S rRNA + S-adenosyl-L-homocysteine + H(+). Functionally, catalyzes the formation of 5-methyl-uridine at position 1939 (m5U1939) in 23S rRNA. In Legionella pneumophila (strain Corby), this protein is 23S rRNA (uracil(1939)-C(5))-methyltransferase RlmD.